A 439-amino-acid polypeptide reads, in one-letter code: uncharacterized protein (439 aa).

Residues 273-439 (PIIILLDHSG…EARKIYKSIS (167 aa)) enclose the VWFA domain.

This is an uncharacterized protein from Methanocaldococcus jannaschii (strain ATCC 43067 / DSM 2661 / JAL-1 / JCM 10045 / NBRC 100440) (Methanococcus jannaschii).